The following is a 417-amino-acid chain: NADH-quinone oxidoreductase subunit D (417 aa).

It belongs to the complex I 49 kDa subunit family. In terms of assembly, NDH-1 is composed of 14 different subunits. Subunits NuoB, C, D, E, F, and G constitute the peripheral sector of the complex.

It localises to the cell inner membrane. It catalyses the reaction a quinone + NADH + 5 H(+)(in) = a quinol + NAD(+) + 4 H(+)(out). In terms of biological role, NDH-1 shuttles electrons from NADH, via FMN and iron-sulfur (Fe-S) centers, to quinones in the respiratory chain. The immediate electron acceptor for the enzyme in this species is believed to be ubiquinone. Couples the redox reaction to proton translocation (for every two electrons transferred, four hydrogen ions are translocated across the cytoplasmic membrane), and thus conserves the redox energy in a proton gradient. This Coxiella burnetii (strain Dugway 5J108-111) protein is NADH-quinone oxidoreductase subunit D.